The chain runs to 256 residues: tRNA pseudouridine synthase A (256 aa).

D55 serves as the catalytic Nucleophile. Y113 lines the substrate pocket.

The protein belongs to the tRNA pseudouridine synthase TruA family. In terms of assembly, homodimer.

The catalysed reaction is uridine(38/39/40) in tRNA = pseudouridine(38/39/40) in tRNA. Its function is as follows. Formation of pseudouridine at positions 38, 39 and 40 in the anticodon stem and loop of transfer RNAs. The chain is tRNA pseudouridine synthase A from Ligilactobacillus salivarius (strain UCC118) (Lactobacillus salivarius).